The sequence spans 115 residues: Nucleoid-associated protein P9211_00201 (115 aa).

It belongs to the YbaB/EbfC family. As to quaternary structure, homodimer.

It is found in the cytoplasm. It localises to the nucleoid. Its function is as follows. Binds to DNA and alters its conformation. May be involved in regulation of gene expression, nucleoid organization and DNA protection. This is Nucleoid-associated protein P9211_00201 from Prochlorococcus marinus (strain MIT 9211).